Consider the following 634-residue polypeptide: Carbon monoxide dehydrogenase 2 (634 aa).

The [4Fe-4S] cluster site is built by Cys44, Cys53, Cys56, Cys61, and Cys73. 5 residues coordinate [Ni-4Fe-5S] cluster: His264, Cys343, Cys453, Cys484, and Cys525.

It belongs to the Ni-containing carbon monoxide dehydrogenase family. As to quaternary structure, homodimer. It depends on [4Fe-4S] cluster as a cofactor. [Ni-4Fe-5S] cluster is required as a cofactor.

The catalysed reaction is CO + 2 oxidized [2Fe-2S]-[ferredoxin] + H2O = 2 reduced [2Fe-2S]-[ferredoxin] + CO2 + 2 H(+). Its function is as follows. CODH oxidizes carbon monoxide coupled, via CooF, to the reduction of a hydrogen cation by a hydrogenase (possibly CooH). This Methanosarcina mazei (strain ATCC BAA-159 / DSM 3647 / Goe1 / Go1 / JCM 11833 / OCM 88) (Methanosarcina frisia) protein is Carbon monoxide dehydrogenase 2 (cooS2).